The chain runs to 129 residues: M-zodatoxin-Lt8a (129 aa).

A signal peptide spans 1 to 20 (MKYFVVALALVAAFACIAES). Residues 21-60 (KPAESEHELAEVEEENELADLEDAVWLEHLADLSDLEEAR) constitute a propeptide that is removed on maturation. The short motif at 57–60 (EEAR) is the Processing quadruplet motif element.

It belongs to the cationic peptide 06 (cytoinsectotoxin) family. Cleavage of the propeptide depends on the processing quadruplet motif (XXXR, with at least one of X being E). Expressed by the venom gland.

Its subcellular location is the secreted. In terms of biological role, insecticidal, cytolytic and antimicrobial peptide. Has insecticidal activity against the flesh fly S.carnaria, and against the cockroach N.cinerea. Has insecticidal activity against D.melanogaster. Has hemolytic activity against human erythrocytes (EC(50)=6 uM). Has cytolytic activity against insect Sf9 cells (EC(50)=1 uM) and human leukocytes (EC(50)=3 uM). Has antibacterial activity against the Gram-positive bacteria A.globiformis VKM Ac-1112 (MIC=0.5 uM), and B.subtilis VKM B-501 (MIC=0.6-0.9 uM), and against the Gram-negative bacteria E.coli C600 (MIC=0.5 uM), E.coli DH5alpha (MIC=0.9 uM), E.coli MH1 (MIC=0.5 uM), P.aeruginosa PAO1 (MIC=1.9 uM), and P.fluorescens VKM B-894 (MIC=3.8 uM). Lacks antimicrobial activity against the Gram-positive bacteria M.luteus and S.aureus, and against the Gram-negative bacterium S.marcescens. Forms voltage-dependent, ion-permeable channels in membranes. At high concentration causes cell membrane lysis. This Lachesana tarabaevi (Spider) protein is M-zodatoxin-Lt8a (cit 1-1).